Consider the following 727-residue polypeptide: Sodium-dependent neutral amino acid transporter SLC6A17 (727 aa).

Over 1–69 the chain is Cytoplasmic; the sequence is MPKNSKVTQR…RPAWNSKLQY (69 aa). A phosphoserine mark is found at Ser13 and Ser20. A helical transmembrane segment spans residues 70 to 90; the sequence is ILAQIGFSVGLGNIWRFPYLC. Over 91–95 the chain is Extracellular; it reads QKNGG. A helical transmembrane segment spans residues 96–116; it reads GAYLVPYLVLLIIIGIPLFFL. Over 117 to 147 the chain is Cytoplasmic; it reads ELAVGQRIRRGSIGVWHYICPRLGGIGFSSC. A helical membrane pass occupies residues 148–168; sequence IVCLFVGLYYNVIIGWSIFYF. Topologically, residues 169-222 are extracellular; that stretch reads FKSFQYPLPWSECPVVRNGSVAVVEAECEKSSATTYFWYREALDISDSISESGG. A glycan (N-linked (GlcNAc...) asparagine) is linked at Asn186. The helical transmembrane segment at 223 to 243 threads the bilayer; it reads LNWKMTLCLLVAWSIVGMAVV. Topologically, residues 244–253 are cytoplasmic; that stretch reads KGIQSSGKVM. A helical transmembrane segment spans residues 254 to 274; sequence YFSSLFPYVVLACFLVRGLLL. Residues 275–300 lie on the Extracellular side of the membrane; the sequence is RGAVDGILHMFTPKLDKMLDPQVWRE. A helical membrane pass occupies residues 301-321; sequence AATQVFFALGLGFGGVIAFSS. The Cytoplasmic portion of the chain corresponds to 322 to 334; sequence YNKQDNNCHFDAA. A helical transmembrane segment spans residues 335–355; the sequence is LVSFINFFTSVLATLVVFAVL. Topologically, residues 356-460 are extracellular; the sequence is GFKANIMNEK…HFPASPFWSV (105 aa). Tyr377 is subject to Phosphotyrosine. Residue Asn393 is glycosylated (N-linked (GlcNAc...) asparagine). Residues 461–481 traverse the membrane as a helical segment; that stretch reads MFFLMLINLGLGSMIGTMAGI. Residues 482 to 490 lie on the Cytoplasmic side of the membrane; the sequence is TTPIIDTFK. The chain crosses the membrane as a helical span at residues 491–511; it reads VPKEMFTVGCCVFAFLVGLLF. The Extracellular portion of the chain corresponds to 512 to 527; sequence VQRSGNYFVTMFDDYS. A helical transmembrane segment spans residues 528–548; the sequence is ATLPLTLIVILENIAVAWIYG. Over 549-573 the chain is Cytoplasmic; it reads TKKFMQELTEMLGFRPYRFYFYMWK. A helical membrane pass occupies residues 574–594; sequence FVSPLCMAVLTTASIIQLGVT. The Extracellular segment spans residues 595 to 617; the sequence is PPGYSAWIKEEAAERYLYFPNWA. A helical transmembrane segment spans residues 618-638; the sequence is MALLITLIVVATLPIPVVFVL. At 639-727 the chain is on the cytoplasmic side; that stretch reads RHFHLLSDGS…LLASTPESEL (89 aa). Phosphoserine is present on residues Ser665 and Ser701. A disordered region spans residues 680 to 727; sequence VPSEAPSPMPTHRSYLGPGSTSPLETSGNPNGRYGSGYLLASTPESEL. The segment covering 698-709 has biased composition (polar residues); sequence GSTSPLETSGNP.

This sequence belongs to the sodium:neurotransmitter symporter (SNF) (TC 2.A.22) family.

It localises to the cytoplasmic vesicle. The protein resides in the secretory vesicle. Its subcellular location is the synaptic vesicle membrane. It is found in the postsynapse. The protein localises to the presynapse. The catalysed reaction is L-proline(in) + Na(+)(in) = L-proline(out) + Na(+)(out). The enzyme catalyses L-leucine(in) + Na(+)(in) = L-leucine(out) + Na(+)(out). It carries out the reaction glycine(in) + Na(+)(in) = glycine(out) + Na(+)(out). It catalyses the reaction L-alanine(in) + Na(+)(in) = L-alanine(out) + Na(+)(out). The catalysed reaction is L-glutamine(in) + Na(+)(in) = L-glutamine(out) + Na(+)(out). Its function is as follows. Synaptic vesicle transporter with apparent selectivity for neutral amino acids. The transport is sodium-coupled but chloride-independent, likely driven by the proton electrochemical gradient generated by vacuolar H(+)-ATPase in an overall electrogenic mechanism. May contribute to the synaptic uptake of neurotransmitter precursors in a process coupled in part to vesicle exocytosis. This is Sodium-dependent neutral amino acid transporter SLC6A17 from Homo sapiens (Human).